The chain runs to 896 residues: Protein translocase subunit SecA (896 aa).

ATP-binding positions include Gln-87, Gly-105 to Thr-109, and Asp-512. 2 disordered regions span residues Arg-565–Ser-584 and Glu-840–Ala-896. The Zn(2+) site is built by Cys-876, Cys-878, Cys-887, and His-888. Residues Lys-882–Ala-896 are compositionally biased toward basic residues.

This sequence belongs to the SecA family. As to quaternary structure, monomer and homodimer. Part of the essential Sec protein translocation apparatus which comprises SecA, SecYEG and auxiliary proteins SecDF-YajC and YidC. It depends on Zn(2+) as a cofactor.

The protein localises to the cell inner membrane. The protein resides in the cytoplasm. It catalyses the reaction ATP + H2O + cellular proteinSide 1 = ADP + phosphate + cellular proteinSide 2.. In terms of biological role, part of the Sec protein translocase complex. Interacts with the SecYEG preprotein conducting channel. Has a central role in coupling the hydrolysis of ATP to the transfer of proteins into and across the cell membrane, serving both as a receptor for the preprotein-SecB complex and as an ATP-driven molecular motor driving the stepwise translocation of polypeptide chains across the membrane. In Mannheimia succiniciproducens (strain KCTC 0769BP / MBEL55E), this protein is Protein translocase subunit SecA.